The following is a 175-amino-acid chain: Peptide deformylase 1 (175 aa).

The Fe cation site is built by Cys-99 and His-141. Glu-142 is an active-site residue. Residue His-145 participates in Fe cation binding.

This sequence belongs to the polypeptide deformylase family. The cofactor is Fe(2+).

It carries out the reaction N-terminal N-formyl-L-methionyl-[peptide] + H2O = N-terminal L-methionyl-[peptide] + formate. Functionally, removes the formyl group from the N-terminal Met of newly synthesized proteins. Requires at least a dipeptide for an efficient rate of reaction. N-terminal L-methionine is a prerequisite for activity but the enzyme has broad specificity at other positions. This chain is Peptide deformylase 1, found in Rickettsia conorii (strain ATCC VR-613 / Malish 7).